The sequence spans 466 residues: Ras GTPase-activating protein-binding protein 1 (466 aa).

Residues 11–133 enclose the NTF2 domain; that stretch reads VGREFVRQYY…FYVHNDIFRY (123 aa). Residues Lys36, Lys50, Lys59, Lys64, Lys76, and Lys123 each participate in a glycyl lysine isopeptide (Lys-Gly) (interchain with G-Cter in ubiquitin) cross-link. The acidic disordered region stretch occupies residues 142–225; the sequence is VTEPQEESEE…EPVLEETVPE (84 aa). At Thr143 the chain carries Phosphothreonine. Disordered stretches follow at residues 144 to 172 and 184 to 243; these read EPQE…DSGT and EEHL…QTVQ. Acidic residues-rich tracts occupy residues 145–157 and 185–206; these read PQEE…EEPE and EHLE…EQEP. Residue Ser149 is modified to Phosphoserine. Phosphoserine occurs at positions 231, 232, 250, and 253. The tract at residues 255-329 is disordered; sequence TSKNLPPSGA…REAGEQGDIE (75 aa). 2 stretches are compositionally biased toward basic and acidic residues: residues 297–307 and 318–329; these read PQRDQRVREQR and PIREAGEQGDIE. The 76-residue stretch at 340–415 folds into the RRM domain; sequence HQLFIGNLPH…VRLNVEEKKT (76 aa). Residues Lys353 and Lys357 each participate in a glycyl lysine isopeptide (Lys-Gly) (interchain with G-Cter in ubiquitin) cross-link. Ser373 is modified (phosphoserine). A Glycyl lysine isopeptide (Lys-Gly) (interchain with G-Cter in ubiquitin) cross-link involves residue Lys376. Position 376 is an N6-acetyllysine; alternate (Lys376). A Glycyl lysine isopeptide (Lys-Gly) (interchain with G-Cter in SUMO2); alternate cross-link involves residue Lys376. Lys393 participates in a covalent cross-link: Glycyl lysine isopeptide (Lys-Gly) (interchain with G-Cter in ubiquitin); alternate. The tract at residues 410–466 is RG-rich region; sequence VEEKKTRAAREGDRRDNRLRGPGGPRGGLGGGMRGPPRGGMVQKPGFGVGRGLAPRQ. Positions 413-428 are enriched in basic and acidic residues; that stretch reads KKTRAAREGDRRDNRL. The interval 413–466 is disordered; it reads KKTRAAREGDRRDNRLRGPGGPRGGLGGGMRGPPRGGMVQKPGFGVGRGLAPRQ. Arg429 is modified (asymmetric dimethylarginine). Residues 430–447 are compositionally biased toward gly residues; that stretch reads GPGGPRGGLGGGMRGPPR. Residue Arg435 is modified to Asymmetric dimethylarginine; alternate. Omega-N-methylarginine; alternate is present on residues Arg435, Arg447, Arg460, and Arg465. Residue Arg460 is modified to Dimethylated arginine; alternate.

Homodimer and oligomer. Component of a TAU mRNP complex, at least composed of IGF2BP1, ELAVL4 and G3BP1. Binds to the SH3 domain of Ras GTPase-activating protein (RASA1) in proliferating cells. No interaction in quiescent cells. Interacts (via NTF2 domain) with USP10; inhibiting stress granule formation by lowering G3BP1 valence. Interacts (via NTF2 domain) with CAPRIN1; promoting stress granule formation by lowering the saturation-concentration of G3BP1. Interacts (via NTF2 domain) with UBAP2L; promoting stress granule formation. Associates (via RG-rich region) with 40S ribosome subunits. Interacts with RPTOR and SPAG5; this complex is increased by oxidative stress. Interacts with ATXN2L. Interacts with STYXL1. Interacts with CGAS (via N-terminus); this interaction promotes the DNA-binding and activation of CGAS. Interacts (via C-terminus) with RIGI. Interacts with PABPC1. Interacts with QKI (isoforms QKI6 and QKI7); directing N(7)-methylguanine-containing mRNAs to stress granules. Mg(2+) serves as cofactor. In terms of processing, phosphorylation of the acidic disordered region regulates stress granule assembly. RASA1-dependent phosphorylation of Ser-149 induces a conformational change that prevents self-association. Dephosphorylation after HRAS activation is required for stress granule assembly. Ser-149 phosphorylation induces partial nuclear localization. Arg-435 is dimethylated, probably to asymmetric dimethylarginine. Post-translationally, ubiquitinated by TRIM21 via 'Lys-63'-linked polyubiquitination in the NTF2 domain in response to heat shock, leading to stress granule disassembly: ubiquitination promotes interaction with the FAF2 adapter, followed by interaction with VCP, which extracts G3BP1 from stress granules, leading to stress granule disassembly. In case of prolonged stress, ubiquitination by TRIM21 leads to autophagy-dependent degradation of G3BP1 via recruitment of ubiquitinated G3BP1 by SQSTM1 and/or CALCOCO2 to autophagosomes.

It is found in the cytoplasm. It localises to the cytosol. The protein resides in the perikaryon. Its subcellular location is the stress granule. The protein localises to the nucleus. It catalyses the reaction ATP + H2O = ADP + phosphate + H(+). Its activity is regulated as follows. Under physiological conditions, G3BP1 adopts a compact state that is stabilized by intramolecular interactions between the RG-rich and the acidic regions that inhibit phase separation. Upon stress, polysomes disassemble and mRNAs are released in an unfolded protein-free state. Binding of unfolded mRNA to G3BP1 outcompetes the intramolecular interactions and RNA-bound G3BP1 adopts an expanded conformation in which the RG-rich region becomes exposed to engage in protein-protein and protein-RNA interactions, allowing physical cross-linking of RNA molecules to form protein-RNA condensates, leading to liquid-liquid phase separation (LLPS). Its function is as follows. Protein involved in various processes, such as stress granule formation and innate immunity. Plays an essential role in stress granule formation. Stress granules are membraneless compartments that store mRNAs and proteins, such as stalled translation pre-initiation complexes, in response to stress. Promotes formation of stress granules phase-separated membraneless compartment by undergoing liquid-liquid phase separation (LLPS) upon unfolded RNA-binding: functions as a molecular switch that triggers RNA-dependent LLPS in response to a rise in intracellular free RNA concentrations. Also acts as an ATP- and magnesium-dependent helicase: unwinds DNA/DNA, RNA/DNA, and RNA/RNA substrates with comparable efficiency. Acts unidirectionally by moving in the 5' to 3' direction along the bound single-stranded DNA. Unwinds preferentially partial DNA and RNA duplexes having a 17 bp annealed portion and either a hanging 3' tail or hanging tails at both 5'- and 3'-ends. Plays an essential role in innate immunity by promoting CGAS and RIGI activity. Participates in the DNA-triggered cGAS/STING pathway by promoting the DNA binding and activation of CGAS. Triggers the condensation of cGAS, a process probably linked to the formation of membrane-less organelles. Also enhances RIGI-induced type I interferon production probably by helping RIGI at sensing pathogenic RNA. May also act as a phosphorylation-dependent sequence-specific endoribonuclease in vitro: Cleaves exclusively between cytosine and adenine and cleaves MYC mRNA preferentially at the 3'-UTR. The sequence is that of Ras GTPase-activating protein-binding protein 1 (G3BP1) from Pongo abelii (Sumatran orangutan).